We begin with the raw amino-acid sequence, 212 residues long: 2-hydroxychromene-2-carboxylate isomerase (212 aa).

Ser24 serves as the catalytic Nucleophile. A glutathione-binding site is contributed by Ser24. Substrate contacts are provided by residues Lys56, 66-67 (NR), and Tyr97. Glutathione contacts are provided by residues Val181 and 192 to 195 (WGND).

The protein belongs to the GST superfamily. NadH family. Requires glutathione as cofactor.

It carries out the reaction 2-hydroxychromene-2-carboxylate = (3E)-4-(2-hydroxyphenyl)-2-oxobut-3-enoate. The protein operates within aromatic compound metabolism; naphthalene degradation. Involved in the naphthalene catabolic pathway. Catalyzes the reversible glutathione-dependent isomerization of 2-hydroxychromene-2-carboxylate (HCCA) to trans-O-hydroxybenzylidenepyruvate (THBPA). This chain is 2-hydroxychromene-2-carboxylate isomerase (doxJ), found in Pseudomonas sp. (strain C18).